A 158-amino-acid polypeptide reads, in one-letter code: NAD(P)H-quinone oxidoreductase subunit J, chloroplastic (158 aa).

This sequence belongs to the complex I 30 kDa subunit family. NDH is composed of at least 16 different subunits, 5 of which are encoded in the nucleus.

It localises to the plastid. The protein localises to the chloroplast thylakoid membrane. It catalyses the reaction a plastoquinone + NADH + (n+1) H(+)(in) = a plastoquinol + NAD(+) + n H(+)(out). It carries out the reaction a plastoquinone + NADPH + (n+1) H(+)(in) = a plastoquinol + NADP(+) + n H(+)(out). Its function is as follows. NDH shuttles electrons from NAD(P)H:plastoquinone, via FMN and iron-sulfur (Fe-S) centers, to quinones in the photosynthetic chain and possibly in a chloroplast respiratory chain. The immediate electron acceptor for the enzyme in this species is believed to be plastoquinone. Couples the redox reaction to proton translocation, and thus conserves the redox energy in a proton gradient. The protein is NAD(P)H-quinone oxidoreductase subunit J, chloroplastic of Nasturtium officinale (Watercress).